We begin with the raw amino-acid sequence, 1137 residues long: Otoancorin (1137 aa).

The N-terminal stretch at 1–23 (MSQGPRTCSLLLVLLLSHGGAYQ) is a signal peptide. Residues Asn-156, Asn-211, Asn-244, Asn-289, Asn-321, Asn-380, Asn-384, Asn-530, Asn-594, Asn-740, and Asn-798 are each glycosylated (N-linked (GlcNAc...) asparagine). Polar residues predominate over residues 1095 to 1115 (HSWQTDPLSSSPTWPASTGSP). Residues 1095–1119 (HSWQTDPLSSSPTWPASTGSPTGEP) form a disordered region. Residue Gly-1113 is the site of GPI-anchor amidated glycine attachment. The propeptide at 1114 to 1137 (SPTGEPASQALWLGCTLLLLTAKS) is removed in mature form.

The protein belongs to the stereocilin family. In terms of tissue distribution, expressed in the inner ear and vestibule.

The protein localises to the apical cell membrane. It is found in the secreted. The protein resides in the extracellular space. Its subcellular location is the extracellular matrix. Its function is as follows. May act as an adhesion molecule. In Mus musculus (Mouse), this protein is Otoancorin (Otoa).